Reading from the N-terminus, the 363-residue chain is NAD(P)H-quinone oxidoreductase subunit 1, chloroplastic (363 aa).

Transmembrane regions (helical) follow at residues 26–46 (IIWI…GVLV), 98–118 (FSIG…VIPF), 127–147 (LTIG…GLLM), 246–266 (TEYS…NLLV), 268–288 (SLFV…YIFV), 300–320 (VFGP…FLFI), and 336–356 (LLNL…LLTT).

The protein belongs to the complex I subunit 1 family. In terms of assembly, NDH is composed of at least 16 different subunits, 5 of which are encoded in the nucleus.

The protein localises to the plastid. It is found in the chloroplast thylakoid membrane. The enzyme catalyses a plastoquinone + NADH + (n+1) H(+)(in) = a plastoquinol + NAD(+) + n H(+)(out). It carries out the reaction a plastoquinone + NADPH + (n+1) H(+)(in) = a plastoquinol + NADP(+) + n H(+)(out). Functionally, NDH shuttles electrons from NAD(P)H:plastoquinone, via FMN and iron-sulfur (Fe-S) centers, to quinones in the photosynthetic chain and possibly in a chloroplast respiratory chain. The immediate electron acceptor for the enzyme in this species is believed to be plastoquinone. Couples the redox reaction to proton translocation, and thus conserves the redox energy in a proton gradient. This chain is NAD(P)H-quinone oxidoreductase subunit 1, chloroplastic, found in Coffea arabica (Arabian coffee).